The sequence spans 721 residues: Catalase-peroxidase (721 aa).

Positions W89–Y212 form a cross-link, tryptophyl-tyrosyl-methioninium (Trp-Tyr) (with M-238). H90 functions as the Proton acceptor in the catalytic mechanism. A cross-link (tryptophyl-tyrosyl-methioninium (Tyr-Met) (with W-89)) is located at residues Y212–M238. H253 contacts heme b.

It belongs to the peroxidase family. Peroxidase/catalase subfamily. As to quaternary structure, homodimer or homotetramer. Requires heme b as cofactor. Formation of the three residue Trp-Tyr-Met cross-link is important for the catalase, but not the peroxidase activity of the enzyme.

It catalyses the reaction H2O2 + AH2 = A + 2 H2O. It carries out the reaction 2 H2O2 = O2 + 2 H2O. Bifunctional enzyme with both catalase and broad-spectrum peroxidase activity. This Shewanella baltica (strain OS195) protein is Catalase-peroxidase.